The chain runs to 207 residues: LexA repressor (207 aa).

The H-T-H motif DNA-binding region spans 28 to 48 (VREIGEAVGLASSSTVHGHLS). Residues Ser-130 and Lys-168 each act as for autocatalytic cleavage activity in the active site.

This sequence belongs to the peptidase S24 family. As to quaternary structure, homodimer.

It catalyses the reaction Hydrolysis of Ala-|-Gly bond in repressor LexA.. In terms of biological role, represses a number of genes involved in the response to DNA damage (SOS response), including recA and lexA. In the presence of single-stranded DNA, RecA interacts with LexA causing an autocatalytic cleavage which disrupts the DNA-binding part of LexA, leading to derepression of the SOS regulon and eventually DNA repair. In Staphylococcus carnosus (strain TM300), this protein is LexA repressor.